Here is a 357-residue protein sequence, read N- to C-terminus: Chorismate synthase (357 aa).

Arginine 46 is an NADP(+) binding site. Residues 123–125 (RSS), 235–236 (NA), glycine 275, 290–294 (KPTPS), and arginine 316 contribute to the FMN site.

Belongs to the chorismate synthase family. As to quaternary structure, homotetramer. It depends on FMNH2 as a cofactor.

The enzyme catalyses 5-O-(1-carboxyvinyl)-3-phosphoshikimate = chorismate + phosphate. It participates in metabolic intermediate biosynthesis; chorismate biosynthesis; chorismate from D-erythrose 4-phosphate and phosphoenolpyruvate: step 7/7. Its function is as follows. Catalyzes the anti-1,4-elimination of the C-3 phosphate and the C-6 proR hydrogen from 5-enolpyruvylshikimate-3-phosphate (EPSP) to yield chorismate, which is the branch point compound that serves as the starting substrate for the three terminal pathways of aromatic amino acid biosynthesis. This reaction introduces a second double bond into the aromatic ring system. The polypeptide is Chorismate synthase (Sulfurovum sp. (strain NBC37-1)).